Here is a 126-residue protein sequence, read N- to C-terminus: Major sperm protein 3 (126 aa).

Residue alanine 2 is modified to N-acetylalanine. Positions 8 to 125 (DIATMPAQKV…RRKNLPIEYN (118 aa)) constitute an MSP domain.

As to expression, sperm.

The protein localises to the cell projection. The protein resides in the pseudopodium. Its subcellular location is the cytoplasm. It is found in the cytoskeleton. Central component in molecular interactions underlying sperm crawling. Forms an extensive filament system that extends from sperm villipoda, along the leading edge of the pseudopod. The sequence is that of Major sperm protein 3 (MSP-3) from Globodera rostochiensis (Golden nematode worm).